Consider the following 430-residue polypeptide: Tol-Pal system protein TolB (430 aa).

An N-terminal signal peptide occupies residues 1-21 (MKQALRVAFGFLILWASVLHA).

It belongs to the TolB family. As to quaternary structure, the Tol-Pal system is composed of five core proteins: the inner membrane proteins TolA, TolQ and TolR, the periplasmic protein TolB and the outer membrane protein Pal. They form a network linking the inner and outer membranes and the peptidoglycan layer.

It is found in the periplasm. Part of the Tol-Pal system, which plays a role in outer membrane invagination during cell division and is important for maintaining outer membrane integrity. TolB occupies a key intermediary position in the Tol-Pal system because it communicates directly with both membrane-embedded components, Pal in the outer membrane and TolA in the inner membrane. The polypeptide is Tol-Pal system protein TolB (Shigella boydii serotype 18 (strain CDC 3083-94 / BS512)).